The sequence spans 275 residues: Dermonecrotic toxin SpeSicTox-betaIIA1 (275 aa).

The active site involves His-5. Mg(2+) is bound by residues Glu-25 and Asp-27. The active-site Nucleophile is His-41. Intrachain disulfides connect Cys-45-Cys-51 and Cys-47-Cys-190. Asp-85 provides a ligand contact to Mg(2+).

This sequence belongs to the arthropod phospholipase D family. Class II subfamily. Mg(2+) serves as cofactor. Expressed by the venom gland.

It is found in the secreted. It catalyses the reaction an N-(acyl)-sphingosylphosphocholine = an N-(acyl)-sphingosyl-1,3-cyclic phosphate + choline. It carries out the reaction an N-(acyl)-sphingosylphosphoethanolamine = an N-(acyl)-sphingosyl-1,3-cyclic phosphate + ethanolamine. The catalysed reaction is a 1-acyl-sn-glycero-3-phosphocholine = a 1-acyl-sn-glycero-2,3-cyclic phosphate + choline. The enzyme catalyses a 1-acyl-sn-glycero-3-phosphoethanolamine = a 1-acyl-sn-glycero-2,3-cyclic phosphate + ethanolamine. Its function is as follows. Dermonecrotic toxins cleave the phosphodiester linkage between the phosphate and headgroup of certain phospholipids (sphingolipid and lysolipid substrates), forming an alcohol (often choline) and a cyclic phosphate. This toxin acts on sphingomyelin (SM). It may also act on ceramide phosphoethanolamine (CPE), lysophosphatidylcholine (LPC) and lysophosphatidylethanolamine (LPE), but not on lysophosphatidylserine (LPS), and lysophosphatidylglycerol (LPG). It acts by transphosphatidylation, releasing exclusively cyclic phosphate products as second products. Induces dermonecrosis, hemolysis, increased vascular permeability, edema, inflammatory response, and platelet aggregation. This Sicarius peruensis (Six-eyed sand spider) protein is Dermonecrotic toxin SpeSicTox-betaIIA1.